The following is a 181-amino-acid chain: ADP-ribosylation factor-like protein 1 (181 aa).

Residue Gly-2 is the site of N-myristoyl glycine attachment. Residues 24–31, 45–48, Gly-70, 126–129, and 160–161 each bind GTP; these read GLDGAGKT, TIPT, NKQD, and AT. Mg(2+)-binding residues include Thr-31 and Thr-48.

Belongs to the small GTPase superfamily. Arf family. The GTP-bound form interacts with GOLGA1. The GTP-bound form interacts with GOLGA4 and RGPD8. The GTP-bound form directly interacts with ARFIP2. Binds to SCOC, preferentially in its GTP-bound form. May interact with UNC119. Interacts with ARFIP1; this interaction directs ARFIP1 to the trans-Golgi membranes. Interacts with ARFGEF1 (via N-terminus). In terms of tissue distribution, detected in heart, liver, lung and liver (at protein level). Detected in fetal heart, lung, liver and kidney. Detected in adult heart, placenta, lung, liver, skeletal muscle, kidney and pancreas.

The protein localises to the golgi apparatus membrane. The protein resides in the golgi apparatus. It localises to the trans-Golgi network membrane. It is found in the membrane. GTP-binding protein that recruits several effectors, such as golgins, arfaptins and Arf-GEFs to the trans-Golgi network, and modulates their functions at the Golgi complex. Plays thereby a role in a wide range of fundamental cellular processes, including cell polarity, innate immunity, or protein secretion mediated by arfaptins, which were shown to play a role in maintaining insulin secretion from pancreatic beta cells. The chain is ADP-ribosylation factor-like protein 1 (ARL1) from Homo sapiens (Human).